A 74-amino-acid chain; its full sequence is uncharacterized protein (74 aa).

Positions 1-19 (MIGLIVVPILFAIKGIVVG) are cleaved as a signal peptide. The interval 26–74 (KFGKHSNTKDQKEDKDEDKRQSISQRKQHTEWPIEENRIQRRAPNQSAL) is disordered. 2 stretches are compositionally biased toward basic and acidic residues: residues 32–46 (NTKD…DKRQ) and 53–64 (QHTEWPIEENRI).

This is an uncharacterized protein from Saccharomyces cerevisiae (strain ATCC 204508 / S288c) (Baker's yeast).